A 346-amino-acid polypeptide reads, in one-letter code: Blue-light-activated histidine kinase 2 (346 aa).

The PAS domain occupies 8–82; sequence HDKEAWGRLP…KAIRNCEEVE (75 aa). At C55 the chain carries S-4a-FMN cysteine. One can recognise a PAC domain in the interval 79 to 133; sequence EEVEETIYNYRADGEGFWNHLLMGPLEDQDEKCRYFVGIQVDMGQSESPDRATEL. The region spanning 139–334 is the Histidine kinase domain; it reads EVQHRVKNHL…IVNIDIPLSQ (196 aa). H142 is modified (phosphohistidine; by autocatalysis).

In terms of processing, FMN binds covalently to cysteine after exposure to blue light and this bond is spontaneously broken in the dark.

The enzyme catalyses ATP + protein L-histidine = ADP + protein N-phospho-L-histidine.. In terms of biological role, photosensitive kinase that is involved in increased bacterial virulence upon exposure to light. The sequence is that of Blue-light-activated histidine kinase 2 from Erythrobacter litoralis (strain HTCC2594).